The chain runs to 107 residues: Probable antitoxin TacA (107 aa).

Belongs to the TacA antitoxin family. In terms of assembly, forms a complex with cognate antitoxin TacT.

Probable antitoxin component of a type II toxin-antitoxin (TA) system. Should neutralize cognate toxin TacT (y4aS). The protein is Probable antitoxin TacA of Sinorhizobium fredii (strain NBRC 101917 / NGR234).